The following is a 28-amino-acid chain: Turritoxin F21-2 (28 aa).

Expressed by the venom duct.

The protein localises to the secreted. Potent inhibitor of human alpha-3-beta-2 nAChRs (IC(50)=566.2 nM). Irreversibly inhibits the acetylcholine-induced response on human alpha-7/CHRNA7 (55% inhibition at 5.6 uM) and alpha-3-beta-2/CHRNA3-CHRNB2 (91% inhibition) nAChRs. This chain is Turritoxin F21-2, found in Polystira nobilis (Sea snail).